Reading from the N-terminus, the 183-residue chain is Orotate phosphoribosyltransferase (183 aa).

5-phospho-alpha-D-ribose 1-diphosphate-binding positions include arginine 90, lysine 91, lysine 94, and 115-123; that span reads DDVATTGGS. Residues threonine 119 and arginine 147 each contribute to the orotate site.

Belongs to the purine/pyrimidine phosphoribosyltransferase family. PyrE subfamily. Homodimer. Mg(2+) serves as cofactor.

It carries out the reaction orotidine 5'-phosphate + diphosphate = orotate + 5-phospho-alpha-D-ribose 1-diphosphate. The protein operates within pyrimidine metabolism; UMP biosynthesis via de novo pathway; UMP from orotate: step 1/2. In terms of biological role, catalyzes the transfer of a ribosyl phosphate group from 5-phosphoribose 1-diphosphate to orotate, leading to the formation of orotidine monophosphate (OMP). This Methanopyrus kandleri (strain AV19 / DSM 6324 / JCM 9639 / NBRC 100938) protein is Orotate phosphoribosyltransferase.